The sequence spans 68 residues: Large ribosomal subunit protein uL29 (68 aa).

This sequence belongs to the universal ribosomal protein uL29 family.

The sequence is that of Large ribosomal subunit protein uL29 from Wigglesworthia glossinidia brevipalpis.